We begin with the raw amino-acid sequence, 243 residues long: Adenosylcobinamide-GDP ribazoletransferase (243 aa).

The next 6 membrane-spanning stretches (helical) occupy residues 33-53 (FLPV…LLAP), 59-79 (IIIV…HIDG), 105-125 (IGAF…TLAY), 127-147 (TENM…VFAA), 172-192 (VISI…GAII), and 223-243 (TIEI…SIII).

Belongs to the CobS family. Requires Mg(2+) as cofactor.

Its subcellular location is the cell membrane. It catalyses the reaction alpha-ribazole + adenosylcob(III)inamide-GDP = adenosylcob(III)alamin + GMP + H(+). The catalysed reaction is alpha-ribazole 5'-phosphate + adenosylcob(III)inamide-GDP = adenosylcob(III)alamin 5'-phosphate + GMP + H(+). It participates in cofactor biosynthesis; adenosylcobalamin biosynthesis; adenosylcobalamin from cob(II)yrinate a,c-diamide: step 7/7. Its function is as follows. Joins adenosylcobinamide-GDP and alpha-ribazole to generate adenosylcobalamin (Ado-cobalamin). Also synthesizes adenosylcobalamin 5'-phosphate from adenosylcobinamide-GDP and alpha-ribazole 5'-phosphate. The chain is Adenosylcobinamide-GDP ribazoletransferase from Alkaliphilus oremlandii (strain OhILAs) (Clostridium oremlandii (strain OhILAs)).